Reading from the N-terminus, the 378-residue chain is Cytochrome b (378 aa).

Helical transmembrane passes span 33 to 53 (FGSL…FLAM), 77 to 98 (WMIR…FLHT), 113 to 133 (WNIG…GYVL), and 178 to 198 (FFTF…IHLL). Positions 83 and 97 each coordinate heme b. Positions 182 and 196 each coordinate heme b. A ubiquinone is bound at residue histidine 201. 4 consecutive transmembrane segments (helical) span residues 226 to 246 (TKDI…TLFT), 288 to 308 (LGGV…PATH), 320 to 340 (ITQI…WIGG), and 347 to 366 (FEAI…TLIP).

Belongs to the cytochrome b family. As to quaternary structure, the cytochrome bc1 complex contains 11 subunits: 3 respiratory subunits (MT-CYB, CYC1 and UQCRFS1), 2 core proteins (UQCRC1 and UQCRC2) and 6 low-molecular weight proteins (UQCRH/QCR6, UQCRB/QCR7, UQCRQ/QCR8, UQCR10/QCR9, UQCR11/QCR10 and a cleavage product of UQCRFS1). This cytochrome bc1 complex then forms a dimer. It depends on heme b as a cofactor.

Its subcellular location is the mitochondrion inner membrane. Its function is as follows. Component of the ubiquinol-cytochrome c reductase complex (complex III or cytochrome b-c1 complex) that is part of the mitochondrial respiratory chain. The b-c1 complex mediates electron transfer from ubiquinol to cytochrome c. Contributes to the generation of a proton gradient across the mitochondrial membrane that is then used for ATP synthesis. This chain is Cytochrome b (MT-CYB), found in Cebus albifrons (White-fronted capuchin).